A 276-amino-acid polypeptide reads, in one-letter code: Secretagogin (276 aa).

EF-hand domains lie at 12–47 (LDAA…MLMK), 58–93 (NLHK…EDEN), 105–140 (DSSV…LFLH), 149–184 (KLEE…QENF), 197–232 (ERKR…MMEL), and 240–276 (VDLD…KINP). Positions 25, 27, 31, 36, 71, 73, 75, 77, 82, 118, 120, 122, 129, 162, 164, 166, 168, 173, 210, 212, 214, 221, 254, 256, 258, 260, and 265 each coordinate Ca(2+).

Expressed at high levels in the pancreatic islets of Langerhans and to a much lesser extent in the gastrointestinal tract (stomach, small intestine and colon), the adrenal medulla and cortex and the thyroid C-cells. In the brain, the expression is restricted to distinct subtypes of neurons with highest expression in the molecular layer of the cerebellum (stellate and basket cells), in the anterior part of the pituitary gland, in the thalamus, in the hypothalamus and in a subgroup of neocortical neurons.

The protein localises to the cytoplasm. It is found in the secreted. It localises to the cytoplasmic vesicle. Its subcellular location is the secretory vesicle membrane. The polypeptide is Secretagogin (SCGN) (Homo sapiens (Human)).